An 828-amino-acid chain; its full sequence is MSGSTASARNKHSKGNLKHNNNKNKNNDEPIDITKDEFERIREALGKEEFRKLFFEYVDEIQDPANRKIYEDEITQLEKERGVEVTFIHPQPGFVVKTSIDGEQKCFINIAGSPEIARPESKLDINPDTGDRGLSWSIPMAQTASRDDCDAKNQQCKVFDVVFHPDALHLGQKNSQFRKCLIDTALDAVEREYEVNLDRTNLKYPKLDYKGIARPTVIRKLSKNPTDEELEPHPLEHSFPTKPTAGEGEPKVLPMKVQKEQPKAPKFTEPKYSIKYSHDVDLSEYTNELDAKLQVTKPRALVVEIELPLLRSTAECELDVTSKSIYLLSERAGAKYRLKLDLPYTVDDKSGRARFDTDKRRLNIHLPVIRSNEPNLRLLSREDSGVELHSNSESPVEEEEDGEDEIEAEEEEEEVKTKVKPTSNPPSFLKSSLHYQLPGKFDCNLLDNCMAFTLHVANVQPDSIEYVQEKRSLHLQFASMGNGYYPTHYAFYVALPAKESQLIIENVEAEAWDNNVILKLDLNKSSESIESYLAGLDDQDLQDYAIHGQFKALKEAPVQEDKPGDIQFKRNDQEPSLEITVSGLNAVEQQEREEGEIEEAEEQQHKKSASKKQRGKRNKKERSLSESACVSLPTSVDSQPMATLKLPQRKQRSFSECHEQQHHHHRGILKRFSRYDGNDSCSSIDDCSSSYPCSVEASRSFGGIPEEDSSLSESCKKTVRFNDHIMKQVFRLDSSILGQRKKNQKRRDCKLRAQQRRLSEGDSADYEESTANKTQYCKYNKKHHHHHDSGLDLTRHNKKRELAEEADNKNSLMFEMDDDDDDEDEDLI.

Disordered stretches follow at residues 1–31 (MSGS…DEPI), 223–250 (KNPT…EGEP), 383–424 (DSGV…PTSN), 556–668 (APVQ…HRGI), and 741–828 (KKNQ…EDLI). The segment covering 9–22 (RNKHSKGNLKHNNN) has biased composition (basic residues). A Phosphoserine modification is found at Ser-384. Over residues 395–414 (PVEEEEDGEDEIEAEEEEEE) the composition is skewed to acidic residues. Over residues 556–573 (APVQEDKPGDIQFKRNDQ) the composition is skewed to basic and acidic residues. The span at 591–601 (EREEGEIEEAE) shows a compositional bias: acidic residues. Over residues 606-620 (KKSASKKQRGKRNKK) the composition is skewed to basic residues. Polar residues predominate over residues 625–641 (SESACVSLPTSVDSQPM). Basic residues predominate over residues 741–755 (KKNQKRRDCKLRAQQ). Position 759 is a phosphoserine (Ser-759). The segment covering 788 to 808 (DSGLDLTRHNKKRELAEEADN) has biased composition (basic and acidic residues). Acidic residues predominate over residues 815–828 (EMDDDDDDEDEDLI).

The protein belongs to the PIH1 family. Kintoun subfamily. As to quaternary structure, interacts with Pp1alpha-96A, Pp1-87B, Pp1-13C and flw.

Its subcellular location is the cytoplasm. Required for cytoplasmic pre-assembly of axonemal dyneins, thereby playing a central role in motility in cilia and flagella. Involved in pre-assembly of dynein arm complexes in the cytoplasm before intraflagellar transport loads them for the ciliary compartment. The protein is Protein kintoun of Drosophila willistoni (Fruit fly).